A 567-amino-acid chain; its full sequence is MINSVGVVRKEAENCNCLQVFFVSGSFKVDSVEAKKKEENFRETLRDMANSKYEYVKSFELEDEVMLPNLMVVRIDGRDFSRFSQVHEFEKPNDETALNLMNSCSAAVLEEFPDIIFAYGYSDEYSFVFKKTSRFYQRRASKILSLVASFFAAVYVTKWKEFFPQRKLLYAPSFSSKVVSCASAEVLQAYLAWRQQDCHANNQYDTCFWMLVKSGKSVSETQEILKDTQKQQKNELLFQKFGINYKTLPELFRQGSCLFKKKVEETVKHDENGNPVKRLRRKAVFVHSENIAGRSFWNEQPSLYNDLGHFTKDIGKIEPDFIRSFQFENKLLPLTWVVVRIDGCHFHRFSDVHEFEKPNDEQALKLMNSCAVAVLEEFEDIHFAYGVSDEYSFVLKKESELYKRQSSKIISAVASFFTSTYVLQWGEFFPHKELKYPPSFDGRAVCYPTYNILLDYLAWRQVDCHINNQYNTCFWMLVKSGKNKTQSQDYLKGTQTREKNELLSRQFGIEYNSLPVIFRMGSSVFRLKEAENGVVSGKKLEGEVVVDHCNIIERCFWEEHLHILSYS.

3 residues coordinate Mg(2+): aspartate 342, glycine 343, and aspartate 389. Residues 342 to 347 (DGCHFH) and 388 to 389 (SD) each bind GTP. Residues lysine 397 and lysine 403 each participate in a glycyl lysine isopeptide (Lys-Gly) (interchain with G-Cter in ubiquitin) cross-link.

It belongs to the tRNA(His) guanylyltransferase family. Mg(2+) serves as cofactor.

Its subcellular location is the nucleus. The protein resides in the nucleoplasm. It carries out the reaction a 5'-end ribonucleotide-tRNA(His) + GTP + ATP + H2O = a 5'-end phospho-guanosine-ribonucleotide-tRNA(His) + AMP + 2 diphosphate + H(+). In terms of biological role, adds a GMP to the 5'-end of tRNA(His) after transcription and RNase P cleavage. This Arabidopsis thaliana (Mouse-ear cress) protein is tRNA(His) guanylyltransferase 1 (THG1).